The sequence spans 969 residues: Lateral signaling target protein 2 homolog (969 aa).

Residue lysine 87 forms a Glycyl lysine isopeptide (Lys-Gly) (interchain with G-Cter in ubiquitin) linkage. Disordered regions lie at residues 290 to 323 (QDGE…GVEE), 336 to 360 (SVWK…EEPI), 390 to 437 (STLL…YHDD), and 715 to 777 (RSEC…DMSE). The segment covering 295–310 (PTSSTNDPSASTGPDS) has biased composition (polar residues). Positions 336 to 346 (SVWKEEEEKQV) are enriched in basic and acidic residues. Residues 391–402 (TLLSPPSQNQSP) show a composition bias toward polar residues. The span at 411–423 (GSSLEGSSATSST) shows a compositional bias: low complexity. The segment covering 715-729 (RSECFGKQSKDDNRK) has biased composition (basic and acidic residues). 2 stretches are compositionally biased toward low complexity: residues 732 to 745 (SSSQ…VPSS) and 756 to 769 (SLSS…VSSL). Residues 899–959 (DEACNSCIAC…VCTHCYMFHV (61 aa)) form an FYVE-type zinc finger. The Zn(2+) site is built by cysteine 905, cysteine 908, cysteine 921, cysteine 924, cysteine 929, cysteine 932, cysteine 951, and cysteine 954.

This sequence belongs to the lst-2 family. Post-translationally, monoubiquitination at Lys-87 prevents binding to phosphatidylinositol 3-phosphate (PI3P) and localization to early endosome membranes.

It is found in the cytoplasm. Its subcellular location is the cytosol. The protein resides in the early endosome membrane. Its function is as follows. Negative regulator of epidermal growth factor receptor (EGFR) signaling. Acts by promoting EGFR degradation in endosomes when not monoubiquitinated. The polypeptide is Lateral signaling target protein 2 homolog (zfyve28) (Danio rerio (Zebrafish)).